We begin with the raw amino-acid sequence, 224 residues long: Deoxyribose-phosphate aldolase (224 aa).

Asp92 (proton donor/acceptor) is an active-site residue. The Schiff-base intermediate with acetaldehyde role is filled by Lys154. The active-site Proton donor/acceptor is Lys183.

The protein belongs to the DeoC/FbaB aldolase family. DeoC type 1 subfamily.

Its subcellular location is the cytoplasm. It catalyses the reaction 2-deoxy-D-ribose 5-phosphate = D-glyceraldehyde 3-phosphate + acetaldehyde. It participates in carbohydrate degradation; 2-deoxy-D-ribose 1-phosphate degradation; D-glyceraldehyde 3-phosphate and acetaldehyde from 2-deoxy-alpha-D-ribose 1-phosphate: step 2/2. In terms of biological role, catalyzes a reversible aldol reaction between acetaldehyde and D-glyceraldehyde 3-phosphate to generate 2-deoxy-D-ribose 5-phosphate. This chain is Deoxyribose-phosphate aldolase, found in Actinobacillus succinogenes (strain ATCC 55618 / DSM 22257 / CCUG 43843 / 130Z).